Consider the following 282-residue polypeptide: Protein GAM-1 (282 aa).

A BC-box-like motif is present at residues 251–260 (SLQDWARLGV).

Interacts with host HDAC1. Interacts with host E1-activating enzyme (SAE1/UBA2 heterodimer). Interacts with host retinoblastoma protein. Seems to form a complex with host E4F1 and HDAC1. Seems to form complexes with either CUL2-elongin BC complex-RBX1 or CUL5-elongin BC complex-RBX1. Interacts with TCEB1/Elongin-C, CUL2 and CUL5 in vitro.

Its subcellular location is the host nucleus. Its function is as follows. Early protein essential for viral replication. Strong and global transcriptional activator of both viral and cellular genes. Activates transcription by blocking host retinoblastoma protein (RB) and inhibiting the SUMO pathway. Inhibition of host RB leads to the activation of E2F1-dependent transcription and, in particular, of E2F1-regulated S-phase genes. Stimulation of progression from G1 to S phase allows the virus to efficiently use the cellular DNA replicating machinery to achieve viral genome replication. Blocks the SUMO pathway by targeting the E1 enzyme (SAE1/UBA2 heterodimer) to the ubiquitin-proteasome machinery. Mediates SAE1 degradation possibly through the formation of complexes with either CUL2-elongin BC complex-RBX1 or CUL5-elongin BC complex-RBX1. The degradation of UBA2 is probably a consequent effect of SAE1 disappearance. Inhibits HDAC1 sumoylation, thereby interfering with histone deacetylation mediated by HDAC1, leading to activation of transcription. Mediates induction of heat-shock response. Seems to have an antiapoptotic function. The sequence is that of Protein GAM-1 from Galliformes (FAdV-1).